A 189-amino-acid polypeptide reads, in one-letter code: Anthranilate synthase component 2 (189 aa).

A Glutamine amidotransferase type-1 domain is found at methionine 1 to aspartate 189. Glycine 52–glycine 54 provides a ligand contact to L-glutamine. Catalysis depends on cysteine 79, which acts as the Nucleophile; for GATase activity. Residues glutamine 83 and serine 129–leucine 130 contribute to the L-glutamine site. Residues histidine 169 and glutamate 171 contribute to the active site.

As to quaternary structure, tetramer of two components I and two components II.

The protein resides in the plastid. It localises to the chloroplast. It catalyses the reaction chorismate + L-glutamine = anthranilate + pyruvate + L-glutamate + H(+). It participates in amino-acid biosynthesis; L-tryptophan biosynthesis; L-tryptophan from chorismate: step 1/5. In Porphyra purpurea (Red seaweed), this protein is Anthranilate synthase component 2 (trpG).